The primary structure comprises 316 residues: Aspartate carbamoyltransferase catalytic subunit (316 aa).

2 residues coordinate carbamoyl phosphate: Arg66 and Thr67. L-aspartate is bound at residue Lys94. Carbamoyl phosphate is bound by residues Arg116, His146, and Gln149. Residues Arg179 and Arg234 each coordinate L-aspartate. Residues Gly275 and Pro276 each contribute to the carbamoyl phosphate site.

It belongs to the aspartate/ornithine carbamoyltransferase superfamily. ATCase family. As to quaternary structure, heterododecamer (2C3:3R2) of six catalytic PyrB chains organized as two trimers (C3), and six regulatory PyrI chains organized as three dimers (R2).

The enzyme catalyses carbamoyl phosphate + L-aspartate = N-carbamoyl-L-aspartate + phosphate + H(+). The protein operates within pyrimidine metabolism; UMP biosynthesis via de novo pathway; (S)-dihydroorotate from bicarbonate: step 2/3. Its function is as follows. Catalyzes the condensation of carbamoyl phosphate and aspartate to form carbamoyl aspartate and inorganic phosphate, the committed step in the de novo pyrimidine nucleotide biosynthesis pathway. The chain is Aspartate carbamoyltransferase catalytic subunit from Nitrosomonas europaea (strain ATCC 19718 / CIP 103999 / KCTC 2705 / NBRC 14298).